Reading from the N-terminus, the 312-residue chain is Olfactory receptor 6C1 (312 aa).

The Extracellular portion of the chain corresponds to 1–23; that stretch reads MRNHTEITEFILLGLTDDPNFQV. Asparagine 3 carries an N-linked (GlcNAc...) asparagine glycan. The helical transmembrane segment at 24–44 threads the bilayer; the sequence is VIFVFLLITYMLSITGNLTLI. At 45-52 the chain is on the cytoplasmic side; that stretch reads TITLLDSH. The chain crosses the membrane as a helical span at residues 53–73; that stretch reads LQTPMYFFLRNFSILEISFTT. The Extracellular segment spans residues 74–97; the sequence is VSIPKFLGNIISGDKTISFNNCIV. The cysteines at positions 95 and 187 are disulfide-linked. Residues 98–118 form a helical membrane-spanning segment; it reads QLFFFILLGVTEFYLLAAMSY. Residues 119–137 are Cytoplasmic-facing; it reads DRYVAICKPLHCLSIMNRR. Residues 138-158 traverse the membrane as a helical segment; the sequence is VCTLLVFTSWLVSFLIIFPAL. Topologically, residues 159–195 are extracellular; it reads MLLLKLHYCRSNIIDHFTCDYFPLLQLACSDTKFLEV. The helical transmembrane segment at 196-215 threads the bilayer; the sequence is MGFSCAAFTLMFTLALIFLS. Residues 216 to 235 are Cytoplasmic-facing; sequence YIYIIRTILRIPSTSQRTKA. A helical transmembrane segment spans residues 236–256; that stretch reads FSTCSSHMVVVSISYGSCIFM. The Extracellular portion of the chain corresponds to 257–269; it reads YIKPSAKDRVSLS. The helical transmembrane segment at 270 to 290 threads the bilayer; that stretch reads KGVAILNTSVAPMMNPFIYSL. Residues 291 to 312 lie on the Cytoplasmic side of the membrane; it reads RNQQVKQAFINMARKTVFFTST.

Belongs to the G-protein coupled receptor 1 family.

The protein localises to the cell membrane. In terms of biological role, odorant receptor. This is Olfactory receptor 6C1 (OR6C1) from Homo sapiens (Human).